The following is a 272-amino-acid chain: 2-dehydro-3-deoxyphosphooctonate aldolase (272 aa).

It belongs to the KdsA family.

It is found in the cytoplasm. The enzyme catalyses D-arabinose 5-phosphate + phosphoenolpyruvate + H2O = 3-deoxy-alpha-D-manno-2-octulosonate-8-phosphate + phosphate. Its pathway is carbohydrate biosynthesis; 3-deoxy-D-manno-octulosonate biosynthesis; 3-deoxy-D-manno-octulosonate from D-ribulose 5-phosphate: step 2/3. The protein operates within bacterial outer membrane biogenesis; lipopolysaccharide biosynthesis. The polypeptide is 2-dehydro-3-deoxyphosphooctonate aldolase (Trichlorobacter lovleyi (strain ATCC BAA-1151 / DSM 17278 / SZ) (Geobacter lovleyi)).